Reading from the N-terminus, the 540-residue chain is Putative F-box/LRR-repeat protein At5g41840 (540 aa).

One can recognise an F-box domain in the interval 13–61 (GDRISGLPDALICHILSFLPTKEAASTTVLAKRWKPLLAFVPNLNFDDS). LRR repeat units follow at residues 80 to 105 (FMSF…HVKC), 137 to 165 (RNYC…KIQF), 189 to 214 (YFKI…VLAN), 217 to 242 (WADS…NFCR), 254 to 282 (YEDY…EYSD), 329 to 360 (ILYL…TIKT), and 361 to 386 (TPYV…VFEG).

The sequence is that of Putative F-box/LRR-repeat protein At5g41840 from Arabidopsis thaliana (Mouse-ear cress).